Consider the following 506-residue polypeptide: Xaa-Pro aminopeptidase 3 (506 aa).

The transit peptide at 1–31 (MPSLLSTPKLAPVLARLRGLSGCMSCLQRRY) directs the protein to the mitochondrion. The tract at residues 54–79 (HPHLLRPGEVTPGLSQVEYALRRHKL) is interaction with TNFRSF1B. Substrate contacts are provided by Tyr-300, Asp-331, Asp-342, His-423, His-430, Glu-450, and Glu-474. 3 residues coordinate Mn(2+): Asp-331, Asp-342, and His-423. Positions 450 and 474 each coordinate Mn(2+).

Belongs to the peptidase M24B family. In terms of assembly, homodimer. Interacts with TNFRSF1B/TNFR2 (activated) and TRAF2. The cofactor is Mn(2+). Expressed in brain, kidney, heart, liver, skeletal muscle and testis.

The protein resides in the mitochondrion. The protein localises to the cytoplasm. The enzyme catalyses Release of any N-terminal amino acid, including proline, that is linked to proline, even from a dipeptide or tripeptide.. Functionally, catalyzes the removal of a penultimate prolyl residue from the N-termini of peptides, such as Leu-Pro-Ala. Also shows low activity towards peptides with Ala or Ser at the P1 position. Promotes TNFRSF1B-mediated phosphorylation of MAPK8/JNK1 and MAPK9/JNK2, suggesting a function as an adapter protein for TNFRSF1B; the effect is independent of XPNPEP3 peptidase activity. May inhibit apoptotic cell death induced via TNF-TNFRSF1B signaling. The sequence is that of Xaa-Pro aminopeptidase 3 (Xpnpep3) from Mus musculus (Mouse).